The chain runs to 451 residues: Magnesium transporter MgtE (451 aa).

Residues 1 to 285 are Cytoplasmic-facing; sequence MVQNMTYDEL…TKAYVAAYRR (285 aa). Mg(2+)-binding residues include aspartate 64 and aspartate 96. CBS domains follow at residues 140 to 203 and 204 to 260; these read MTNR…VQDL and MFTR…EADE. Residues glutamate 218, aspartate 228, aspartate 249, aspartate 252, glutamate 257, glutamate 260, and aspartate 261 each contribute to the Mg(2+) site. A helical transmembrane segment spans residues 286–306; that stretch reads LPWLILLLFIGLISGSIISYF. Residues 307–311 lie on the Extracellular side of the membrane; that stretch reads EDALK. A helical membrane pass occupies residues 312-332; that stretch reads QVVALAFFMPMVSGMTGNTGT. Over 333–371 the chain is Cytoplasmic; that stretch reads QSLAVVIRGLSKEEMNKKTIVRLIFREFRTSIFIGAVCS. The next 2 helical transmembrane spans lie at 372–392 and 393–413; these read VLIA…FVVA and SSLF…PIIL. At 414–427 the chain is on the cytoplasmic side; sequence HKLKVDPAIASGPL. 2 residues coordinate Mg(2+): aspartate 419 and aspartate 433. The chain crosses the membrane as a helical span at residues 428-448; the sequence is ITTLNDILSLLIYFGIATAFI. Residues 449–451 are Extracellular-facing; it reads HSL.

This sequence belongs to the SLC41A transporter family. Homodimer.

It is found in the cell membrane. It carries out the reaction Mg(2+)(in) = Mg(2+)(out). With respect to regulation, binds cyclic di-AMP (c-di-AMP), which may regulate the transporter activity. In terms of biological role, acts as a magnesium transporter. MgtE is the dominant transporter under rich-medium growth conditions, and it may provide the primary route of magnesium import in B.subtilis, while the other putative transport proteins are likely to be utilized for more-specialized growth conditions. This chain is Magnesium transporter MgtE, found in Bacillus subtilis (strain 168).